A 544-amino-acid chain; its full sequence is Esterase P (544 aa).

The signal sequence occupies residues 1–19 (MSIFKRLLCLTLLWIAALE). Residue Asn-75 is glycosylated (N-linked (GlcNAc...) asparagine). Cys-83 and Cys-102 are disulfide-bonded. The N-linked (GlcNAc...) asparagine glycan is linked to Asn-114. The Acyl-ester intermediate role is filled by Ser-206. A disulfide bridge connects residues Cys-258 and Cys-270. Asn-262 and Asn-456 each carry an N-linked (GlcNAc...) asparagine glycan. The Charge relay system role is filled by His-466. A disulfide bridge connects residues Cys-514 and Cys-535.

Belongs to the type-B carboxylesterase/lipase family. As to quaternary structure, monomer.

Its subcellular location is the secreted. It carries out the reaction a carboxylic ester + H2O = an alcohol + a carboxylate + H(+). This is Esterase P (Est-P) from Drosophila melanogaster (Fruit fly).